The primary structure comprises 938 residues: Microperfuranone synthase (938 aa).

The adenylation (A) domain stretch occupies residues 44-445 (TSTRISYAEL…AGRTKDTIIV (402 aa)). In terms of domain architecture, Carrier spans 579 to 655 (SDSERAVQKA…AIARSIDSSR (77 aa)). Residues 581 to 652 (SERAVQKALV…TPGAIARSID (72 aa)) are thiolation and peptide carrier (T) domain. Position 613 is an O-(pantetheine 4'-phosphoryl)serine (S613). Positions 676–923 (PLFCIHPGSG…AKMLNREHIA (248 aa)) are thioesterase (TE) domain. Residue S746 is part of the active site.

It belongs to the ATP-dependent AMP-binding enzyme family.

It functions in the pathway secondary metabolite biosynthesis. Functionally, microperfuranone synthase is the only protein required for the biosynthesis of the secondary metabolite microperfuranone from phenylpyruvic acid (PPA). Several steps for the microperfuranione biosynthesis have been proposed. These steps include the activation of PPA, by the micA adenylation (A) domain to AMP-phenylpyruvic acid followed by loading of the PPA unit to the thiolation and peptide carrier (T) domain and eventually transferring to the thioesterase (TE) domain. After loading another PPA unit onto the T domain, aldol condensation establishes the carbon-carbon bond between the alpha- and beta-carbon of the two PPA units. Sulfur-assisted furan ring formation, TE domain mediated hydrolysis, decarboxylation, and keto-enol tautomerization would generate microperfuranone attached to the T domain. Finally, microperfuranone is released by the TE domain. This Emericella nidulans (strain FGSC A4 / ATCC 38163 / CBS 112.46 / NRRL 194 / M139) (Aspergillus nidulans) protein is Microperfuranone synthase.